Here is a 245-residue protein sequence, read N- to C-terminus: Phycocyanobilin:ferredoxin oxidoreductase (245 aa).

It belongs to the HY2 family.

The catalysed reaction is (2R,3Z)-phycocyanobilin + 4 oxidized [2Fe-2S]-[ferredoxin] = biliverdin IXalpha + 4 reduced [2Fe-2S]-[ferredoxin] + 4 H(+). Catalyzes the four-electron reduction of biliverdin IX-alpha (2-electron reduction at both the A and D rings); the reaction proceeds via an isolatable 2-electron intermediate, 181,182-dihydrobiliverdin. Upon overexpression in E.coli with PCB:ferredoxin oxidoreductase, CpeS and either CpcB or PecB permits synthesis of phycocyanin-coupled CpcB or PecB. This is Phycocyanobilin:ferredoxin oxidoreductase (pcyA) from Nostoc sp. (strain PCC 7120 / SAG 25.82 / UTEX 2576).